The primary structure comprises 253 residues: Phosphoribosylaminoimidazole-succinocarboxamide synthase (253 aa).

The protein belongs to the SAICAR synthetase family.

The catalysed reaction is 5-amino-1-(5-phospho-D-ribosyl)imidazole-4-carboxylate + L-aspartate + ATP = (2S)-2-[5-amino-1-(5-phospho-beta-D-ribosyl)imidazole-4-carboxamido]succinate + ADP + phosphate + 2 H(+). The protein operates within purine metabolism; IMP biosynthesis via de novo pathway; 5-amino-1-(5-phospho-D-ribosyl)imidazole-4-carboxamide from 5-amino-1-(5-phospho-D-ribosyl)imidazole-4-carboxylate: step 1/2. In Jannaschia sp. (strain CCS1), this protein is Phosphoribosylaminoimidazole-succinocarboxamide synthase.